A 300-amino-acid polypeptide reads, in one-letter code: Nucleotide-binding protein MCCL_0516 (300 aa).

Residue 15–22 participates in ATP binding; that stretch reads GMSGAGKS. 66–69 contacts GTP; that stretch reads DLRG.

The protein belongs to the RapZ-like family.

In terms of biological role, displays ATPase and GTPase activities. The polypeptide is Nucleotide-binding protein MCCL_0516 (Macrococcus caseolyticus (strain JCSC5402) (Macrococcoides caseolyticum)).